A 51-amino-acid polypeptide reads, in one-letter code: Glutamate dehydrogenase (51 aa).

Position 31 (lysine 31) interacts with substrate.

The protein belongs to the Glu/Leu/Phe/Val dehydrogenases family. Homohexamer.

Its subcellular location is the mitochondrion matrix. The enzyme catalyses L-glutamate + NAD(+) + H2O = 2-oxoglutarate + NH4(+) + NADH + H(+). It catalyses the reaction L-glutamate + NADP(+) + H2O = 2-oxoglutarate + NH4(+) + NADPH + H(+). In terms of biological role, mitochondrial glutamate dehydrogenase that converts L-glutamate into alpha-ketoglutarate. Plays a key role in glutamine anaplerosis by producing alpha-ketoglutarate, an important intermediate in the tricarboxylic acid cycle. The polypeptide is Glutamate dehydrogenase (Electrophorus electricus (Electric eel)).